The sequence spans 358 residues: MSDSKEPRLQQLGLLEEEQLRGVGFRQTRGYKSLAGCLGHGPLVLQLLSFTLLAGLLVQVSKVPSSLSQGQSKQDAIYQNLTQLKAAVSELSEKSKLQEIYQELTRLKAAVGELPEKSKLQEIYQELTRLKAAVGELPEKSKQQEIYQELTQLKAAVDGLPDRSKQQEIYQELTQLKAAVDGLPDRSKQQEIYQELIQLKAAVERLCRPCPWEWTFFQGNCYFMSNSQRNWHNSITACQEVGAQLVVIKSAEEQNFLQLQSSRSNRFTWMGLSDLNHEGTWQWVDGSPLLPSFKQYWNKGEPNNIGEEDCAEFSGNGWNDDKCNLAKFWICKKSAASCSGDEERLLSPAPTTPNPPPE.

At methionine 1–cysteine 37 the chain is on the cytoplasmic side. 3 short sequence motifs (endocytosis signal) span residues leucine 14–leucine 15, glutamate 16–glutamate 18, and tyrosine 31–leucine 34. The helical; Signal-anchor for type II membrane protein transmembrane segment at leucine 38–valine 58 threads the bilayer. Residues glutamine 59–glutamate 358 are Extracellular-facing. N-linked (GlcNAc...) asparagine glycosylation occurs at asparagine 80. 5 consecutive repeat copies span residues lysine 96–serine 118, lysine 119–serine 141, lysine 142–serine 164, lysine 165–serine 187, and lysine 188–proline 211. The 5 X approximate tandem repeats stretch occupies residues lysine 96–threonine 280. Intrachain disulfides connect cysteine 210/cysteine 221, cysteine 238/cysteine 331, and cysteine 310/cysteine 323. The region spanning phenylalanine 217 to lysine 332 is the C-type lectin domain. 6 residues coordinate Ca(2+): glutamate 301, asparagine 303, isoleucine 305, glutamate 308, asparagine 319, and aspartate 320. Residues alanine 336 to glutamate 358 form a disordered region.

Homotetramer. Interacts with C1QBP; the interaction is indicative for a C1q:C1QBP:CD209 signaling complex. Interacts with ICAM2 and ICAM3 by binding to mannose-like carbohydrates. Interacts (via C-type lectin domain) with CEACAM1 (via Lewis X moieties); this interaction is regulated by the glycosylation pattern of CEACAM1 on cell types and regulates contact between dendritic cells and neutrophils.

It localises to the membrane. Its function is as follows. Pathogen-recognition receptor expressed on the surface of immature dendritic cells (DCs) and involved in initiation of primary immune response. Thought to mediate the endocytosis of pathogens which are subsequently degraded in lysosomal compartments. The receptor returns to the cell membrane surface and the pathogen-derived antigens are presented to resting T-cells via MHC class II proteins to initiate the adaptive immune response. Probably recognizes in a calcium-dependent manner high mannose N-linked oligosaccharides in a variety of pathogen antigens. On DCs it is a high affinity receptor for ICAM2 and ICAM3 by binding to mannose-like carbohydrates. May act as a DC rolling receptor that mediates transendothelial migration of DC presursors from blood to tissues by binding endothelial ICAM2. Seems to regulate DC-induced T-cell proliferation by binding to ICAM3 on T-cells in the immunological synapse formed between DC and T-cells. This Papio hamadryas (Hamadryas baboon) protein is CD209 antigen (CD209).